The sequence spans 138 residues: Nucleoside diphosphate kinase (138 aa).

Residues K10, F58, R86, T92, R103, and N113 each coordinate ATP. The active-site Pros-phosphohistidine intermediate is H116.

It belongs to the NDK family. In terms of assembly, homotetramer. It depends on Mg(2+) as a cofactor.

It is found in the cytoplasm. It catalyses the reaction a 2'-deoxyribonucleoside 5'-diphosphate + ATP = a 2'-deoxyribonucleoside 5'-triphosphate + ADP. The catalysed reaction is a ribonucleoside 5'-diphosphate + ATP = a ribonucleoside 5'-triphosphate + ADP. Functionally, major role in the synthesis of nucleoside triphosphates other than ATP. The ATP gamma phosphate is transferred to the NDP beta phosphate via a ping-pong mechanism, using a phosphorylated active-site intermediate. In Actinobacillus pleuropneumoniae serotype 5b (strain L20), this protein is Nucleoside diphosphate kinase.